A 131-amino-acid polypeptide reads, in one-letter code: Small ribosomal subunit protein uS8 (131 aa).

The protein belongs to the universal ribosomal protein uS8 family. In terms of assembly, part of the 30S ribosomal subunit. Contacts proteins S5 and S12.

One of the primary rRNA binding proteins, it binds directly to 16S rRNA central domain where it helps coordinate assembly of the platform of the 30S subunit. In Ralstonia nicotianae (strain ATCC BAA-1114 / GMI1000) (Ralstonia solanacearum), this protein is Small ribosomal subunit protein uS8.